The chain runs to 356 residues: Serine/threonine-protein phosphatase 4 regulatory subunit 2 (356 aa).

A compositionally biased stretch (acidic residues) spans Asn202–Glu240. Positions Asn202–Val335 are disordered. The segment covering Pro326–Val335 has biased composition (polar residues).

Belongs to the PPP4R2 family. As to quaternary structure, regulatory subunit (R2) of the histone H2A phosphatase complex (HTP-C) consisting of PPH3, PSY2 and PSY4.

The protein resides in the nucleus. Regulatory subunit of the histone H2A phosphatase complex, which dephosphorylates H2AS128ph (gamma-H2A) that has been displaced from sites of DNA lesions in the double-stranded DNA break repair process. Dephosphorylation is necessary for efficient recovery from the DNA damage checkpoint. This Eremothecium gossypii (strain ATCC 10895 / CBS 109.51 / FGSC 9923 / NRRL Y-1056) (Yeast) protein is Serine/threonine-protein phosphatase 4 regulatory subunit 2 (PSY4).